The sequence spans 193 residues: Signal peptidase I (193 aa).

Residues 1 to 25 are Cytoplasmic-facing; that stretch reads MTEEQKPTSEKSVKRKSNTYWEWGK. The helical transmembrane segment at 26–42 threads the bilayer; the sequence is AIIIAVALALLIRHFLF. Residues 43–193 are Extracellular-facing; that stretch reads EPYLVEGSSM…FPFHDMRQTK (151 aa). Active-site residues include Ser-51 and Lys-93.

The protein belongs to the peptidase S26 family.

Its subcellular location is the cell membrane. It catalyses the reaction Cleavage of hydrophobic, N-terminal signal or leader sequences from secreted and periplasmic proteins.. The protein is Signal peptidase I (sipS2) of Bacillus amyloliquefaciens (Bacillus velezensis).